The chain runs to 136 residues: Ribonuclease P protein component (136 aa).

The interval L39–P59 is disordered.

The protein belongs to the RnpA family. As to quaternary structure, consists of a catalytic RNA component (M1 or rnpB) and a protein subunit.

The catalysed reaction is Endonucleolytic cleavage of RNA, removing 5'-extranucleotides from tRNA precursor.. RNaseP catalyzes the removal of the 5'-leader sequence from pre-tRNA to produce the mature 5'-terminus. It can also cleave other RNA substrates such as 4.5S RNA. The protein component plays an auxiliary but essential role in vivo by binding to the 5'-leader sequence and broadening the substrate specificity of the ribozyme. The chain is Ribonuclease P protein component from Salinispora tropica (strain ATCC BAA-916 / DSM 44818 / JCM 13857 / NBRC 105044 / CNB-440).